The primary structure comprises 149 residues: SsrA-binding protein (149 aa).

Belongs to the SmpB family.

The protein resides in the cytoplasm. Functionally, required for rescue of stalled ribosomes mediated by trans-translation. Binds to transfer-messenger RNA (tmRNA), required for stable association of tmRNA with ribosomes. tmRNA and SmpB together mimic tRNA shape, replacing the anticodon stem-loop with SmpB. tmRNA is encoded by the ssrA gene; the 2 termini fold to resemble tRNA(Ala) and it encodes a 'tag peptide', a short internal open reading frame. During trans-translation Ala-aminoacylated tmRNA acts like a tRNA, entering the A-site of stalled ribosomes, displacing the stalled mRNA. The ribosome then switches to translate the ORF on the tmRNA; the nascent peptide is terminated with the 'tag peptide' encoded by the tmRNA and targeted for degradation. The ribosome is freed to recommence translation, which seems to be the essential function of trans-translation. This is SsrA-binding protein from Wolbachia pipientis subsp. Culex pipiens (strain wPip).